Here is a 101-residue protein sequence, read N- to C-terminus: MQSISNCPIGLVSKNTINSASTIAEWVACPWKYINVVGSGRYVSNKPDKITRYDLLKAAQEAEMQELLTRNDMKGRHKRNKKSKIALETIAEENSSTESLF.

It localises to the mitochondrion. Functionally, mitochondrial protein that is involved in citrinin resistance. The chain is Citrinin resistance protein, mitochondrial from Saccharomyces cerevisiae (strain ATCC 204508 / S288c) (Baker's yeast).